The following is a 38-amino-acid chain: Large ribosomal subunit protein bL36 (38 aa).

The protein belongs to the bacterial ribosomal protein bL36 family.

In Alcanivorax borkumensis (strain ATCC 700651 / DSM 11573 / NCIMB 13689 / SK2), this protein is Large ribosomal subunit protein bL36.